A 91-amino-acid chain; its full sequence is Ixochymostatin (91 aa).

The signal sequence occupies residues 1–20 (MKTYVLQALLLTLAVAVVRA). 5 disulfides stabilise this stretch: cysteine 34-cysteine 70, cysteine 43-cysteine 66, cysteine 48-cysteine 62, cysteine 53-cysteine 90, and cysteine 72-cysteine 84. In terms of domain architecture, TIL spans 34-90 (CAEGETWKECVGSSCAELTCEHPEPSLGCTYDCNYGCYCAPDFFRNANKECVKKDKC).

This sequence belongs to the serine protease inhibitor-like (TIL domain-containing) family. In terms of tissue distribution, salivary gland. Midgut.

The protein resides in the secreted. Functionally, tight-binding competitive inhibitor of chymotrypsin-like proteases; inhibits host chymase, cathepsin G (CTSG) and chymotrypsin. Inhibits chymase-mediated generation of vasoconstrictor peptides: angiotensin II and endothelin I. Reduces chymase-mediated vascular permeability and vascular endothelial-cadherin degradation. This is Ixochymostatin from Ixodes scapularis (Black-legged tick).